Reading from the N-terminus, the 551-residue chain is Rhodopsin kinase grk7-a (551 aa).

Serine 36 bears the Phosphoserine mark. Residues 57–174 (YQSICVEQPI…QNSPFYDRFL (118 aa)) form the RGS domain. One can recognise a Protein kinase domain in the interval 189 to 451 (FYEFRILGKG…DDDPRKHAFF (263 aa)). ATP-binding positions include 195-203 (LGKGGFGEV) and lysine 218. The active-site Proton acceptor is the aspartate 314. One can recognise an AGC-kinase C-terminal domain in the interval 452–517 (KSINFQRLEA…GAIPISWQKE (66 aa)). Serine 487 is modified (phosphoserine). The disordered stretch occupies residues 529 to 551 (DPSREATGGGGNSGEKSGVCSIL). A compositionally biased stretch (low complexity) spans 542–551 (GEKSGVCSIL). Cysteine methyl ester is present on cysteine 548. A lipid anchor (S-geranylgeranyl cysteine) is attached at cysteine 548. The propeptide at 549–551 (SIL) is removed in mature form.

The protein belongs to the protein kinase superfamily. AGC Ser/Thr protein kinase family. GPRK subfamily. In terms of processing, autophosphorylated in vitro at Ser-487. Phosphorylation at Ser-36 is regulated by light and activated by cAMP.

The protein localises to the membrane. It carries out the reaction L-threonyl-[rhodopsin] + ATP = O-phospho-L-threonyl-[rhodopsin] + ADP + H(+). The enzyme catalyses L-seryl-[rhodopsin] + ATP = O-phospho-L-seryl-[rhodopsin] + ADP + H(+). In terms of biological role, retina-specific kinase involved in the shutoff of the photoresponse and adaptation to changing light conditions via cone opsin phosphorylation, including rhodopsin (RHO). This is Rhodopsin kinase grk7-a (grk7-a) from Xenopus laevis (African clawed frog).